We begin with the raw amino-acid sequence, 120 residues long: Small ribosomal subunit protein uS13 (120 aa).

Residues 93-120 form a disordered region; that stretch reads RRGLPCRGQKTKTNARTRKGKRKTVGAA.

This sequence belongs to the universal ribosomal protein uS13 family. Part of the 30S ribosomal subunit. Forms a loose heterodimer with protein S19. Forms two bridges to the 50S subunit in the 70S ribosome.

Functionally, located at the top of the head of the 30S subunit, it contacts several helices of the 16S rRNA. In the 70S ribosome it contacts the 23S rRNA (bridge B1a) and protein L5 of the 50S subunit (bridge B1b), connecting the 2 subunits; these bridges are implicated in subunit movement. Contacts the tRNAs in the A and P-sites. The chain is Small ribosomal subunit protein uS13 from Sulfurimonas denitrificans (strain ATCC 33889 / DSM 1251) (Thiomicrospira denitrificans (strain ATCC 33889 / DSM 1251)).